The sequence spans 372 residues: Solute carrier family 35 member F6 (372 aa).

Positions Met-1 to Gly-18 are cleaved as a signal peptide. Transmembrane regions (helical) follow at residues Phe-48–Leu-68 and Leu-89–Leu-109. An EamA domain is found at Met-105–Leu-160. N-linked (GlcNAc...) asparagine glycosylation occurs at Asn-110. Helical transmembrane passes span Ser-116–Leu-136, Trp-145–Ser-165, Val-176–Leu-196, Ala-211–Phe-231, Leu-261–Ile-281, Met-293–Trp-312, and Ile-320–Leu-336. Thr-366 is modified (phosphothreonine).

Belongs to the SLC35F solute transporter family. Interacts with SLC25A5.

The protein localises to the mitochondrion. The protein resides in the lysosome membrane. Its function is as follows. Involved in the maintenance of mitochondrial membrane potential in pancreatic ductal adenocarcinoma (PDAC) cells. Promotes pancreatic ductal adenocarcinoma (PDAC) cell growth. May play a role as a nucleotide-sugar transporter. This chain is Solute carrier family 35 member F6 (Slc35f6), found in Mus musculus (Mouse).